The chain runs to 443 residues: Enolase B (443 aa).

Substrate is bound by residues His156 and Glu165. Glu208 serves as the catalytic Proton donor. Positions 243, 296, and 323 each coordinate Mg(2+). Positions 296 and 323 each coordinate substrate. The Proton acceptor role is filled by Lys348. Substrate contacts are provided by residues 375 to 378 (SHRS) and Lys399.

This sequence belongs to the enolase family. As to quaternary structure, homodimer. The cofactor is Mg(2+).

It localises to the cytoplasm. The catalysed reaction is (2R)-2-phosphoglycerate = phosphoenolpyruvate + H2O. It functions in the pathway carbohydrate degradation; glycolysis; pyruvate from D-glyceraldehyde 3-phosphate: step 4/5. This Dictyostelium discoideum (Social amoeba) protein is Enolase B (enoB).